A 196-amino-acid chain; its full sequence is MSYIPYVVEKTARGERSYDIYSRLLKDRIIMLSGEVNDAVASSIVAQMLFLEAEDPEKDIYFYINSPGGVVTAGMAIYDTMNYIRPDVATICVGQAASMGAFLLSSGAKGKRYALPHARIMIHQPLGGAQGQATDIAIQAKEILRMKEELNAILAKNCSQSIKKVEKDTDRDNFMSAEESKEYGMIDEVLLKKSKE.

The active-site Nucleophile is the S98. H123 is a catalytic residue.

Belongs to the peptidase S14 family. Fourteen ClpP subunits assemble into 2 heptameric rings which stack back to back to give a disk-like structure with a central cavity, resembling the structure of eukaryotic proteasomes.

Its subcellular location is the cytoplasm. The enzyme catalyses Hydrolysis of proteins to small peptides in the presence of ATP and magnesium. alpha-casein is the usual test substrate. In the absence of ATP, only oligopeptides shorter than five residues are hydrolyzed (such as succinyl-Leu-Tyr-|-NHMec, and Leu-Tyr-Leu-|-Tyr-Trp, in which cleavage of the -Tyr-|-Leu- and -Tyr-|-Trp bonds also occurs).. In terms of biological role, cleaves peptides in various proteins in a process that requires ATP hydrolysis. Has a chymotrypsin-like activity. Plays a major role in the degradation of misfolded proteins. In Sulfurimonas denitrificans (strain ATCC 33889 / DSM 1251) (Thiomicrospira denitrificans (strain ATCC 33889 / DSM 1251)), this protein is ATP-dependent Clp protease proteolytic subunit.